A 369-amino-acid chain; its full sequence is UPF0283 membrane protein RPA1583 (369 aa).

A disordered region spans residues 1 to 61; that stretch reads MTERVPPRRP…APPPPPPRAR (61 aa). The segment covering 34–51 has biased composition (low complexity); it reads AKPSAKADARPAASAAGA. A run of 3 helical transmembrane segments spans residues 90–110, 124–144, and 239–259; these read WGTV…WLWI, LGTI…IIIG, and VSLV…VAIA.

This sequence belongs to the UPF0283 family.

It is found in the cell inner membrane. This is UPF0283 membrane protein RPA1583 from Rhodopseudomonas palustris (strain ATCC BAA-98 / CGA009).